The sequence spans 384 residues: Putative dioxygenase SSO1533 (384 aa).

Fe cation is bound by residues His-296, Glu-302, and His-332.

This sequence belongs to the homogentisate dioxygenase family. Fe cation serves as cofactor.

The chain is Putative dioxygenase SSO1533 from Saccharolobus solfataricus (strain ATCC 35092 / DSM 1617 / JCM 11322 / P2) (Sulfolobus solfataricus).